Reading from the N-terminus, the 113-residue chain is uncharacterized protein (113 aa).

The HTH cro/C1-type domain occupies 16 to 70 (LYEYLEPLDLKINELAELLHVHRNSVSALINNNRKLTTEMAFRLAKVFDTTVDFW). The H-T-H motif DNA-binding region spans 27–46 (INELAELLHVHRNSVSALIN).

Belongs to the VapA/VapI family.

This is an uncharacterized protein from Escherichia coli O6:H1 (strain CFT073 / ATCC 700928 / UPEC).